Reading from the N-terminus, the 480-residue chain is ATP synthase subunit beta (480 aa).

An ATP-binding site is contributed by 158 to 165 (GGAGVGKT).

The protein belongs to the ATPase alpha/beta chains family. In terms of assembly, F-type ATPases have 2 components, CF(1) - the catalytic core - and CF(0) - the membrane proton channel. CF(1) has five subunits: alpha(3), beta(3), gamma(1), delta(1), epsilon(1). CF(0) has three main subunits: a(1), b(2) and c(9-12). The alpha and beta chains form an alternating ring which encloses part of the gamma chain. CF(1) is attached to CF(0) by a central stalk formed by the gamma and epsilon chains, while a peripheral stalk is formed by the delta and b chains.

It localises to the cell inner membrane. It catalyses the reaction ATP + H2O + 4 H(+)(in) = ADP + phosphate + 5 H(+)(out). Functionally, produces ATP from ADP in the presence of a proton gradient across the membrane. The catalytic sites are hosted primarily by the beta subunits. The polypeptide is ATP synthase subunit beta (Acidobacterium capsulatum (strain ATCC 51196 / DSM 11244 / BCRC 80197 / JCM 7670 / NBRC 15755 / NCIMB 13165 / 161)).